A 363-amino-acid polypeptide reads, in one-letter code: MSNKKIIFFTGGGTGGHVFPGISIIQKLKEFDNEIEFFWIGKKNSIEEKLIKEQDNIKFISIPCGKLRRYFSFKNFTDFFKVILGIIKSFYVLKKYKPQLIYATGGFVSTPAIIASSLLKIKSITHEMDLDPGLATKINSKFANNIHISFKESEKYFKNYKNIIYTGSPIRREFLNPDPKIIKQLTQNTNKPIISILGGSLGANALNNLALCIKKDAEIYFIHQSGKNLNDLSEKNYLRRQFFNAEEMASIVKFSNLIISRAGAGAIKEFANAGACAILIPFKKGSRGDQIKNAKLLTNQNACIYIDEDEILNINILKIIKKTLKDREKINSLKENIKKFNNKHSSTLIAKLLIKDIKETKSK.

UDP-N-acetyl-alpha-D-glucosamine-binding positions include 14–16 (TGG), R171, S200, and Q290.

The protein belongs to the glycosyltransferase 28 family. MurG subfamily.

It is found in the cell inner membrane. It carries out the reaction di-trans,octa-cis-undecaprenyl diphospho-N-acetyl-alpha-D-muramoyl-L-alanyl-D-glutamyl-meso-2,6-diaminopimeloyl-D-alanyl-D-alanine + UDP-N-acetyl-alpha-D-glucosamine = di-trans,octa-cis-undecaprenyl diphospho-[N-acetyl-alpha-D-glucosaminyl-(1-&gt;4)]-N-acetyl-alpha-D-muramoyl-L-alanyl-D-glutamyl-meso-2,6-diaminopimeloyl-D-alanyl-D-alanine + UDP + H(+). The protein operates within cell wall biogenesis; peptidoglycan biosynthesis. In terms of biological role, cell wall formation. Catalyzes the transfer of a GlcNAc subunit on undecaprenyl-pyrophosphoryl-MurNAc-pentapeptide (lipid intermediate I) to form undecaprenyl-pyrophosphoryl-MurNAc-(pentapeptide)GlcNAc (lipid intermediate II). This chain is UDP-N-acetylglucosamine--N-acetylmuramyl-(pentapeptide) pyrophosphoryl-undecaprenol N-acetylglucosamine transferase, found in Borreliella burgdorferi (strain ATCC 35210 / DSM 4680 / CIP 102532 / B31) (Borrelia burgdorferi).